A 79-amino-acid chain; its full sequence is Major outer membrane lipoprotein Lpp 3 (79 aa).

A signal peptide spans 1–21 (MNRTNKLILGAVVLGSALLAG). The N-palmitoyl cysteine moiety is linked to residue Cys-22. The S-diacylglycerol cysteine moiety is linked to residue Cys-22. 2 repeats span residues 25 to 35 (NAKIDQLSSDV) and 39 to 49 (SAKVDQLSNDV). A coiled-coil region spans residues 28–76 (IDQLSSDVQTLSAKVDQLSNDVNAMRSDVQAAKDDAARANQRLDNKVLR). At Lys-79 the chain carries N6-murein peptidoglycan lysine.

This sequence belongs to the Lpp family. In terms of assembly, homotrimer.

Its subcellular location is the cell outer membrane. It localises to the secreted. It is found in the cell wall. Functionally, a highly abundant outer membrane lipoprotein that controls the distance between the inner and outer membranes. The only protein known to be covalently linked to the peptidoglycan network (PGN). Also non-covalently binds the PGN. The link between the cell outer membrane and PGN contributes to maintenance of the structural and functional integrity of the cell envelope, and maintains the correct distance between the PGN and the outer membrane. In Salmonella paratyphi A (strain ATCC 9150 / SARB42), this protein is Major outer membrane lipoprotein Lpp 3.